Consider the following 295-residue polypeptide: Small ribosomal subunit protein uS2 (295 aa).

Positions 242–295 (APVEPTLARELAPEAPAPEAPAEEAPAAEAAPAAEAAPAAEAAPAEASSEEQAG) are disordered. Over residues 264–288 (EEAPAAEAAPAAEAAPAAEAAPAEA) the composition is skewed to low complexity.

The protein belongs to the universal ribosomal protein uS2 family.

The polypeptide is Small ribosomal subunit protein uS2 (Phenylobacterium zucineum (strain HLK1)).